Reading from the N-terminus, the 215-residue chain is MVLLTMIARVADGLPLAASMQEDEQSGRDLQQYQSQAKQLFRKLNEQSPTRCTLEAGAMTFHYIIEQGVCYLVLCEAAFPKKLAFAYLEDLHSEFDEQHGKKVPTVSRPYSFIEFDTFIQKTKKLYIDSRARRNLGSINTELQDVQRIMVANIEEVLQRGEALSALDSKANNLSSLSKKYRQDAKYLNMRSTYAKLAAVAVFFIMLIVYVRFWWL.

At valine 2–alanine 194 the chain is on the cytoplasmic side. Residues methionine 6–isoleucine 119 enclose the Longin domain. Residue lysine 38 is modified to N6-acetyllysine. Residues asparagine 134–alanine 194 enclose the v-SNARE coiled-coil homology domain. Serine 137 is modified (phosphoserine). Threonine 140 carries the phosphothreonine modification. Residues serine 164, serine 168, serine 174, and serine 177 each carry the phosphoserine modification. A helical; Anchor for type IV membrane protein membrane pass occupies residues lysine 195–leucine 215.

It belongs to the synaptobrevin family. In terms of assembly, interacts with STX17. Component of two distinct SNARE complexes consisting of STX5, GOSR2/BOS1, BET1 and SEC22B or STX18, USE1L, BNIP1/SEC20L and SEC22B. YKT6 can probably replace SEC22B in either complex. Interacts with the COPII Sec23/24 complex composed of SEC23A and SEC24A; recruits SEC22B into COPII-coated vesicles to allow its transport from the endoplasmic reticulum to the Golgi. Interacts with BET1.

The protein resides in the endoplasmic reticulum membrane. It is found in the endoplasmic reticulum-Golgi intermediate compartment membrane. It localises to the golgi apparatus. The protein localises to the cis-Golgi network membrane. Its subcellular location is the trans-Golgi network membrane. The protein resides in the melanosome. SNARE involved in targeting and fusion of ER-derived transport vesicles with the Golgi complex as well as Golgi-derived retrograde transport vesicles with the ER. This Homo sapiens (Human) protein is Vesicle-trafficking protein SEC22b (SEC22B).